Reading from the N-terminus, the 1073-residue chain is Carbamoyl phosphate synthase large chain (1073 aa).

Positions 1 to 402 (MPRRIDVRKV…ALQKAIRMLD (402 aa)) are carboxyphosphate synthetic domain. Arginine 129, arginine 169, glycine 175, glycine 176, lysine 208, leucine 210, glutamate 215, glycine 241, valine 242, histidine 243, glutamine 284, and glutamate 299 together coordinate ATP. The ATP-grasp 1 domain maps to 133-328 (RETMMKAGLP…LAYIAAKLAL (196 aa)). The Mg(2+) site is built by glutamine 284, glutamate 299, and asparagine 301. Glutamine 284, glutamate 299, and asparagine 301 together coordinate Mn(2+). The segment at 403–555 (IGEPGVVAGP…MSYNAYEDDE (153 aa)) is oligomerization domain. A carbamoyl phosphate synthetic domain region spans residues 556-944 (PITTGRPRLI…LKSWLSVQGN (389 aa)). One can recognise an ATP-grasp 2 domain in the interval 681–871 (SQLLEELGIK…LMRAAAEAAL (191 aa)). ATP contacts are provided by arginine 717, lysine 756, leucine 758, glutamate 763, glycine 787, valine 788, histidine 789, serine 790, glutamine 830, and glutamate 842. 3 residues coordinate Mg(2+): glutamine 830, glutamate 842, and asparagine 844. Positions 830, 842, and 844 each coordinate Mn(2+). The MGS-like domain maps to 944–1073 (NRIPPAGSIV…EYWGPNVEPF (130 aa)). Residues 945-1073 (RIPPAGSIVL…EYWGPNVEPF (129 aa)) are allosteric domain.

It belongs to the CarB family. Composed of two chains; the small (or glutamine) chain promotes the hydrolysis of glutamine to ammonia, which is used by the large (or ammonia) chain to synthesize carbamoyl phosphate. Tetramer of heterodimers (alpha,beta)4. Mg(2+) serves as cofactor. Requires Mn(2+) as cofactor.

It carries out the reaction hydrogencarbonate + L-glutamine + 2 ATP + H2O = carbamoyl phosphate + L-glutamate + 2 ADP + phosphate + 2 H(+). The catalysed reaction is hydrogencarbonate + NH4(+) + 2 ATP = carbamoyl phosphate + 2 ADP + phosphate + 2 H(+). It functions in the pathway amino-acid biosynthesis; L-arginine biosynthesis; carbamoyl phosphate from bicarbonate: step 1/1. Its pathway is pyrimidine metabolism; UMP biosynthesis via de novo pathway; (S)-dihydroorotate from bicarbonate: step 1/3. Functionally, large subunit of the glutamine-dependent carbamoyl phosphate synthetase (CPSase). CPSase catalyzes the formation of carbamoyl phosphate from the ammonia moiety of glutamine, carbonate, and phosphate donated by ATP, constituting the first step of 2 biosynthetic pathways, one leading to arginine and/or urea and the other to pyrimidine nucleotides. The large subunit (synthetase) binds the substrates ammonia (free or transferred from glutamine from the small subunit), hydrogencarbonate and ATP and carries out an ATP-coupled ligase reaction, activating hydrogencarbonate by forming carboxy phosphate which reacts with ammonia to form carbamoyl phosphate. This is Carbamoyl phosphate synthase large chain from Hyperthermus butylicus (strain DSM 5456 / JCM 9403 / PLM1-5).